The chain runs to 317 residues: Transaldolase (317 aa).

Lys-132 functions as the Schiff-base intermediate with substrate in the catalytic mechanism.

The protein belongs to the transaldolase family. Type 1 subfamily. As to quaternary structure, homodimer.

It is found in the cytoplasm. It catalyses the reaction D-sedoheptulose 7-phosphate + D-glyceraldehyde 3-phosphate = D-erythrose 4-phosphate + beta-D-fructose 6-phosphate. It participates in carbohydrate degradation; pentose phosphate pathway; D-glyceraldehyde 3-phosphate and beta-D-fructose 6-phosphate from D-ribose 5-phosphate and D-xylulose 5-phosphate (non-oxidative stage): step 2/3. Transaldolase is important for the balance of metabolites in the pentose-phosphate pathway. The polypeptide is Transaldolase (Actinobacillus succinogenes (strain ATCC 55618 / DSM 22257 / CCUG 43843 / 130Z)).